A 281-amino-acid polypeptide reads, in one-letter code: Acetyl-coenzyme A carboxylase carboxyl transferase subunit beta (281 aa).

The tract at residues 1–23 (MAWFKREKKGISTSTEEKKEAPD) is disordered. The 257-residue stretch at 25-281 (LWNKCPNCKK…LAAFLKMMKN (257 aa)) folds into the CoA carboxyltransferase N-terminal domain. Positions 29, 32, 48, and 51 each coordinate Zn(2+). A C4-type zinc finger spans residues 29 to 51 (CPNCKKALHSADLLENKYVCQYC).

It belongs to the AccD/PCCB family. Acetyl-CoA carboxylase is a heterohexamer composed of biotin carboxyl carrier protein (AccB), biotin carboxylase (AccC) and two subunits each of ACCase subunit alpha (AccA) and ACCase subunit beta (AccD). The cofactor is Zn(2+).

The protein localises to the cytoplasm. The catalysed reaction is N(6)-carboxybiotinyl-L-lysyl-[protein] + acetyl-CoA = N(6)-biotinyl-L-lysyl-[protein] + malonyl-CoA. Its pathway is lipid metabolism; malonyl-CoA biosynthesis; malonyl-CoA from acetyl-CoA: step 1/1. Its function is as follows. Component of the acetyl coenzyme A carboxylase (ACC) complex. Biotin carboxylase (BC) catalyzes the carboxylation of biotin on its carrier protein (BCCP) and then the CO(2) group is transferred by the transcarboxylase to acetyl-CoA to form malonyl-CoA. This Pedobacter heparinus (strain ATCC 13125 / DSM 2366 / CIP 104194 / JCM 7457 / NBRC 12017 / NCIMB 9290 / NRRL B-14731 / HIM 762-3) protein is Acetyl-coenzyme A carboxylase carboxyl transferase subunit beta.